A 933-amino-acid chain; its full sequence is Protein translocase subunit SecA (933 aa).

ATP contacts are provided by residues Gln90, 108 to 112, and Asp504; that span reads GEGKT. The interval 539-570 is disordered; the sequence is GMGSNNRRPQGFGQDSKKKKWQPSADIFPTDL.

Belongs to the SecA family. As to quaternary structure, monomer and homodimer. Part of the essential Sec protein translocation apparatus which comprises SecA, SecYEG and auxiliary proteins SecDF. Other proteins may also be involved.

Its subcellular location is the cell inner membrane. The protein localises to the cellular thylakoid membrane. It is found in the cytoplasm. It carries out the reaction ATP + H2O + cellular proteinSide 1 = ADP + phosphate + cellular proteinSide 2.. Functionally, part of the Sec protein translocase complex. Interacts with the SecYEG preprotein conducting channel. Has a central role in coupling the hydrolysis of ATP to the transfer of proteins into and across the cell membrane, serving as an ATP-driven molecular motor driving the stepwise translocation of polypeptide chains across the membrane. In terms of biological role, probably participates in protein translocation into and across both the cytoplasmic and thylakoid membranes in cyanobacterial cells. This chain is Protein translocase subunit SecA, found in Crocosphaera subtropica (strain ATCC 51142 / BH68) (Cyanothece sp. (strain ATCC 51142)).